Reading from the N-terminus, the 74-residue chain is Guanine nucleotide-binding protein G(T) subunit gamma-T1 (74 aa).

Cysteine 71 carries the cysteine methyl ester modification. Residue cysteine 71 is the site of S-farnesyl cysteine attachment. Residues 72-74 (VIS) constitute a propeptide, removed in mature form.

Belongs to the G protein gamma family. As to quaternary structure, g proteins are composed of 3 units, alpha, beta and gamma. As to expression, retinal rod outer segment.

The protein localises to the cell membrane. Its function is as follows. Guanine nucleotide-binding proteins (G proteins) are involved as a modulator or transducer in various transmembrane signaling systems. The beta and gamma chains are required for the GTPase activity, for replacement of GDP by GTP, and for G protein-effector interaction. This Mus musculus (Mouse) protein is Guanine nucleotide-binding protein G(T) subunit gamma-T1 (Gngt1).